The chain runs to 549 residues: MFAPSLAAFRAMALPIPRLAPVMKSVQPASFPVLGSMAARLSTARGGRGLRAGRRPPGGPKGAAAAEEMAVPIGAALQDPNVGMAPVNDDLEIIEEVMKEDGFQPDPPPPGSPHDPPKLIPRGLGVPVGRRDPPRDPPRLIITEQPKKTGMRFRYECEGRSAGSILGESSTEASKTLPAIELLNCQAIPEVQVTACLVWKDWPHRVHPHGLVGKDCSNGLCQVRLQPHANPRHSFSNLGIQCVKKKEIEAAIEKKLQLGIDPFKAGSLKNHQEVDMNVVRICFQASYRDGSGRTRQLSPVLSEPIFDKKSTNTSELRICRMNKESGPCTGGEELYLLCDKVQKEDIAVVFRKEPWEARADFSQADVHRQGAIVLRTPPYRCVQLSEPVQVEVFLQRLTDRARSRGCPYTYLPRERDAYGVKVKRKRGMPDLLEELSGADPYGIEAKRRKPPPGFMDHFAPLPAADEAFALLADPLDPLSHLPPPSTPQILWGRSYFRTPPPTETPTPPTASWGPICSQGTSEGGGGRTSPRYRPPPPLKWGSQWAPPHQ.

Disordered regions lie at residues Glu-100–Ile-141 and Arg-497–Gln-549. Residues Pro-105–His-114 are compositionally biased toward pro residues. Positions Gly-129 to Pro-138 are enriched in basic and acidic residues. In terms of domain architecture, RHD spans Arg-135–Pro-412. Residues Thr-498–Pro-508 are compositionally biased toward pro residues.

Component of the NF-kappa-B RelB-p50 complex. Component of the NF-kappa-B RelB-p52 complex.

It localises to the nucleus. Functionally, NF-kappa-B is a pleiotropic transcription factor which is present in almost all cell types and is involved in many biological processed such as inflammation, immunity, differentiation, cell growth, tumorigenesis and apoptosis. NF-kappa-B is a homo- or heterodimeric complex formed by the Rel-like domain-containing proteins RELA/p65, RELB, NFKB1/p105, NFKB1/p50, REL and NFKB2/p52. The dimers bind at kappa-B sites in the DNA of their target genes and the individual dimers have distinct preferences for different kappa-B sites that they can bind with distinguishable affinity and specificity. Different dimer combinations act as transcriptional activators or repressors, respectively. NF-kappa-B is controlled by various mechanisms of post-translational modification and subcellular compartmentalization as well as by interactions with other cofactors or corepressors. NF-kappa-B complexes are held in the cytoplasm in an inactive state complexed with members of the NF-kappa-B inhibitor (I-kappa-B) family. In a conventional activation pathway, I-kappa-B is phosphorylated by I-kappa-B kinases (IKKs) in response to different activators, subsequently degraded thus liberating the active NF-kappa-B complex which translocates to the nucleus. NF-kappa-B heterodimeric RelB-p50 and RelB-p52 complexes are transcriptional activators. Stimulates promoter activity in the presence of p49- and p50-NF-kappa-B. Neither associates with DNA nor with p65-NF-kappa-B. May play a role in the regulation of the circadian clock. This Gallus gallus (Chicken) protein is Transcription factor RelB homolog (RELB).